Here is a 634-residue protein sequence, read N- to C-terminus: Calcium up-regulated protein D (634 aa).

A disordered region spans residues 1-23 (MINIEDISKSSNQSEEKQLKSTS). 2 Ricin B-type lectin domains span residues 27 to 146 (KPKY…WTTF) and 117 to 250 (PGNG…WGIN).

The protein belongs to the cup family.

Its subcellular location is the cytoplasm. It is found in the membrane. Its function is as follows. May play an important role in stabilizing and/or regulating the cell membrane during Ca(2+) stress or certain stages of development. This Dictyostelium discoideum (Social amoeba) protein is Calcium up-regulated protein D (cupD).